A 962-amino-acid chain; its full sequence is UPF0182 protein SACE_1102 (962 aa).

7 helical membrane-spanning segments follow: residues 10–30 (ILLI…RLLG), 55–75 (LGLG…NLWI), 106–126 (LFGW…AQSD), 168–188 (FVAI…FGGI), 203–223 (IQLS…YFLD), 250–270 (VKLI…AAIF), and 279–299 (IATV…PALL). 2 disordered regions span residues 707-730 (RTFW…GNQQ) and 876-916 (FGPG…EMTK). A compositionally biased stretch (pro residues) spans 899-910 (GQQPPTQQPPAG).

The protein belongs to the UPF0182 family.

The protein resides in the cell membrane. In Saccharopolyspora erythraea (strain ATCC 11635 / DSM 40517 / JCM 4748 / NBRC 13426 / NCIMB 8594 / NRRL 2338), this protein is UPF0182 protein SACE_1102.